A 1357-amino-acid chain; its full sequence is DNA-directed RNA polymerase subunit beta (1357 aa).

This sequence belongs to the RNA polymerase beta chain family. The RNAP catalytic core consists of 2 alpha, 1 beta, 1 beta' and 1 omega subunit. When a sigma factor is associated with the core the holoenzyme is formed, which can initiate transcription.

It carries out the reaction RNA(n) + a ribonucleoside 5'-triphosphate = RNA(n+1) + diphosphate. Functionally, DNA-dependent RNA polymerase catalyzes the transcription of DNA into RNA using the four ribonucleoside triphosphates as substrates. This Pseudomonas fluorescens (strain SBW25) protein is DNA-directed RNA polymerase subunit beta.